The sequence spans 490 residues: Sushi domain-containing protein 4 (490 aa).

Residues 1–20 (MYHGMNPSNGDGFLEQQLQQ) are disordered. The first 41 residues, 1 to 41 (MYHGMNPSNGDGFLEQQLQQQQPQSPQRLLAVILWFQLALC), serve as a signal peptide directing secretion. Residues 42 to 319 (FGPAQLTGGF…PSTHETLLTT (278 aa)) lie on the Extracellular side of the membrane. Sushi domains lie at 55-119 (NVCA…VCIQ), 120-179 (EDCR…ICQG), 178-239 (QGCL…RCLA), and 241-304 (EVCP…YCIK). 8 disulfide bridges follow: C57-C99, C85-C117, C122-C165, C147-C177, C180-C224, C210-C237, C243-C289, and C274-C302. N-linked (GlcNAc...) asparagine glycosylation is found at N104 and N134. A glycan (N-linked (GlcNAc...) asparagine) is linked at N192. Residues 320-340 (WKIVAFTATSVLLVLLLVILA) traverse the membrane as a helical segment. Residues 341–490 (RMFQTKFKAH…DEIPLMEEDP (150 aa)) are Cytoplasmic-facing. The segment at 394–490 (YPASVGQGCP…DEIPLMEEDP (97 aa)) is disordered. Composition is skewed to polar residues over residues 430 to 444 (CDST…QSLY) and 461 to 475 (DTIS…STSP). Acidic residues predominate over residues 479–490 (IADEIPLMEEDP).

As to expression, high expression in brain and eye, with weaker expression in spinal cord and testis. Detected in white matter of brain and in the outer segments of photoreceptors.

It localises to the membrane. In terms of biological role, acts as a complement inhibitor by disrupting the formation of the classical C3 convertase. Isoform 3 inhibits the classical complement pathway, while membrane-bound isoform 1 inhibits deposition of C3b via both the classical and alternative complement pathways. The chain is Sushi domain-containing protein 4 (Susd4) from Mus musculus (Mouse).